The primary structure comprises 218 residues: Hypoxanthine-guanine phosphoribosyltransferase (218 aa).

Ala2 bears the N-acetylalanine mark. A GMP-binding site is contributed by Lys69. Residue Lys103 is modified to N6-acetyllysine. Lys115 is covalently cross-linked (Glycyl lysine isopeptide (Lys-Gly) (interchain with G-Cter in SUMO1); alternate). Lys115 participates in a covalent cross-link: Glycyl lysine isopeptide (Lys-Gly) (interchain with G-Cter in SUMO2); alternate. Residues 134 to 142 (EDIIDTGKT), Lys166, 186 to 188 (KFV), and Asp194 each bind GMP. Catalysis depends on Asp138, which acts as the Proton acceptor. Thr142 is modified (phosphothreonine). Mg(2+) is bound at residue Asp194.

This sequence belongs to the purine/pyrimidine phosphoribosyltransferase family. Homotetramer. Requires Mg(2+) as cofactor.

Its subcellular location is the cytoplasm. The enzyme catalyses IMP + diphosphate = hypoxanthine + 5-phospho-alpha-D-ribose 1-diphosphate. It carries out the reaction GMP + diphosphate = guanine + 5-phospho-alpha-D-ribose 1-diphosphate. It functions in the pathway purine metabolism; IMP biosynthesis via salvage pathway; IMP from hypoxanthine: step 1/1. Converts guanine to guanosine monophosphate, and hypoxanthine to inosine monophosphate. Transfers the 5-phosphoribosyl group from 5-phosphoribosylpyrophosphate onto the purine. Plays a central role in the generation of purine nucleotides through the purine salvage pathway. This is Hypoxanthine-guanine phosphoribosyltransferase (HPRT1) from Pan troglodytes (Chimpanzee).